A 521-amino-acid chain; its full sequence is Ankyrin repeat domain-containing protein 34B (521 aa).

ANK repeat units follow at residues 9-38 (TESN…YINE), 42-79 (RGET…DPNI), 83-113 (FGKT…DPSL), and 117-146 (TGFS…AKGK). Residues 161 to 188 (QTTRQYLNVPPSPGIEGNNSPSPCTSPS) are disordered. Residues 177-188 (GNNSPSPCTSPS) are compositionally biased toward polar residues.

It belongs to the ANKRD34 family.

Its subcellular location is the cytoplasm. It is found in the nucleus. The sequence is that of Ankyrin repeat domain-containing protein 34B (ankrd34b) from Xenopus laevis (African clawed frog).